The primary structure comprises 524 residues: Dihydromonacolin L monooxygenase mokC (524 aa).

Residues 1 to 25 (MTVPTDTVSRRLQSLAWSDIKQHAP) lie on the Cytoplasmic side of the membrane. Residues 26-47 (WLPSSRTLVSGFLCLILLQILY) form a helical; Signal-anchor for type II membrane protein membrane-spanning segment. Topologically, residues 48 to 524 (SRGRKSDLRV…LMMRRRDEDL (477 aa)) are lumenal. Residues asparagine 396 and asparagine 401 are each glycosylated (N-linked (GlcNAc...) asparagine). A heme-binding site is contributed by cysteine 467.

This sequence belongs to the cytochrome P450 family. It depends on heme as a cofactor.

The protein resides in the endoplasmic reticulum membrane. The enzyme catalyses dihydromonacolin L carboxylate + reduced [NADPH--hemoprotein reductase] + O2 = monacolin L carboxylate + oxidized [NADPH--hemoprotein reductase] + 2 H2O + H(+). It carries out the reaction monacolin L carboxylate + reduced [NADPH--hemoprotein reductase] + O2 = monacolin J carboxylate + oxidized [NADPH--hemoprotein reductase] + H2O + H(+). Its pathway is polyketide biosynthesis; lovastatin biosynthesis. Its function is as follows. Cytochrome P450 monooxygenase; part of the gene cluster that mediates the biosynthesis of monakolin K, also known as lovastatin, and which acts as a potent competitive inhibitor of HMG-CoA reductase. Monakolin K biosynthesis is performed in two stages. The first stage is catalyzed by the nonaketide synthase mokA, which belongs to type I polyketide synthases and catalyzes the iterative nine-step formation of the polyketide. This PKS stage is completed by the action of dehydrogenase mokE, which catalyzes the NADPH-dependent reduction of the unsaturated tetra-, penta- and heptaketide intermediates that arise during the mokA-mediated biosynthesis of the nonaketide chain and leads to dihydromonacolin L. Covalently bound dihydromonacolin L is released from mokA by the mokD esterase. Conversion of dihydromonacolin L into monacolin L and then monacolin J is subsequently performed with the participation of molecular oxygen and P450 monoogygenase mokC. Finally, mokF performs the conversion of monacoline J to monacoline K through the addition of the side-chain diketide moiety (2R)-2-methylbutanoate produced by the diketide synthase mokB. This chain is Dihydromonacolin L monooxygenase mokC, found in Monascus pilosus (Red mold).